The following is a 501-amino-acid chain: 2,3-bisphosphoglycerate-independent phosphoglycerate mutase (501 aa).

Mn(2+) contacts are provided by aspartate 10 and serine 60. The Phosphoserine intermediate role is filled by serine 60. Substrate contacts are provided by residues histidine 121, 151-152 (RD), arginine 182, arginine 188, 256-259 (RPDR), and lysine 329. Residues aspartate 394, histidine 398, aspartate 435, histidine 436, and histidine 453 each coordinate Mn(2+).

It belongs to the BPG-independent phosphoglycerate mutase family. Monomer. Mn(2+) serves as cofactor.

The enzyme catalyses (2R)-2-phosphoglycerate = (2R)-3-phosphoglycerate. It functions in the pathway carbohydrate degradation; glycolysis; pyruvate from D-glyceraldehyde 3-phosphate: step 3/5. Functionally, catalyzes the interconversion of 2-phosphoglycerate and 3-phosphoglycerate. The sequence is that of 2,3-bisphosphoglycerate-independent phosphoglycerate mutase from Mycoplasmopsis synoviae (strain 53) (Mycoplasma synoviae).